We begin with the raw amino-acid sequence, 161 residues long: 2-C-methyl-D-erythritol 2,4-cyclodiphosphate synthase (161 aa).

2 residues coordinate a divalent metal cation: Asp-10 and His-12. 4-CDP-2-C-methyl-D-erythritol 2-phosphate-binding positions include 10 to 12 (DVH) and 36 to 37 (HS). His-44 lines the a divalent metal cation pocket. 4-CDP-2-C-methyl-D-erythritol 2-phosphate contacts are provided by residues 58–60 (DIG), 63–67 (FPDTD), 102–108 (AQAPKML), 134–137 (TTTE), Phe-141, and Arg-144.

Belongs to the IspF family. As to quaternary structure, homotrimer. A divalent metal cation serves as cofactor.

The catalysed reaction is 4-CDP-2-C-methyl-D-erythritol 2-phosphate = 2-C-methyl-D-erythritol 2,4-cyclic diphosphate + CMP. It functions in the pathway isoprenoid biosynthesis; isopentenyl diphosphate biosynthesis via DXP pathway; isopentenyl diphosphate from 1-deoxy-D-xylulose 5-phosphate: step 4/6. In terms of biological role, involved in the biosynthesis of isopentenyl diphosphate (IPP) and dimethylallyl diphosphate (DMAPP), two major building blocks of isoprenoid compounds. Catalyzes the conversion of 4-diphosphocytidyl-2-C-methyl-D-erythritol 2-phosphate (CDP-ME2P) to 2-C-methyl-D-erythritol 2,4-cyclodiphosphate (ME-CPP) with a corresponding release of cytidine 5-monophosphate (CMP). The polypeptide is 2-C-methyl-D-erythritol 2,4-cyclodiphosphate synthase (Shewanella loihica (strain ATCC BAA-1088 / PV-4)).